The primary structure comprises 194 residues: ATP-dependent Clp protease proteolytic subunit (194 aa).

Serine 98 functions as the Nucleophile in the catalytic mechanism. Residue histidine 123 is part of the active site.

The protein belongs to the peptidase S14 family. In terms of assembly, fourteen ClpP subunits assemble into 2 heptameric rings which stack back to back to give a disk-like structure with a central cavity, resembling the structure of eukaryotic proteasomes.

The protein localises to the cytoplasm. It catalyses the reaction Hydrolysis of proteins to small peptides in the presence of ATP and magnesium. alpha-casein is the usual test substrate. In the absence of ATP, only oligopeptides shorter than five residues are hydrolyzed (such as succinyl-Leu-Tyr-|-NHMec, and Leu-Tyr-Leu-|-Tyr-Trp, in which cleavage of the -Tyr-|-Leu- and -Tyr-|-Trp bonds also occurs).. Its function is as follows. Cleaves peptides in various proteins in a process that requires ATP hydrolysis. Has a chymotrypsin-like activity. Plays a major role in the degradation of misfolded proteins. This is ATP-dependent Clp protease proteolytic subunit from Clostridium botulinum (strain Hall / ATCC 3502 / NCTC 13319 / Type A).